The following is a 1084-amino-acid chain: CRISPR-associated endonuclease Cas9 (1084 aa).

Catalysis depends on aspartate 8, which acts as the For RuvC-like nuclease domain. 3 residues coordinate Mn(2+): aspartate 8, glutamate 496, and glutamate 500. Residues 504-665 form the HNH Cas9-type domain; the sequence is TEKRAREMDG…MDEEIDARSM (162 aa). Catalysis depends on histidine 573, which acts as the Proton acceptor for HNH nuclease domain. Histidine 727 provides a ligand contact to Mn(2+).

The protein belongs to the CRISPR-associated protein Cas9 family. Subtype II-C subfamily. Monomer. Binds crRNA and tracrRNA. Mg(2+) serves as cofactor.

Functionally, CRISPR (clustered regularly interspaced short palindromic repeat) is an adaptive immune system that provides protection against mobile genetic elements (viruses, transposable elements and conjugative plasmids). CRISPR clusters contain spacers, sequences complementary to antecedent mobile elements, and target invading nucleic acids. CRISPR clusters are transcribed and processed into CRISPR RNA (crRNA). In type II CRISPR systems correct processing of pre-crRNA requires a trans-encoded small RNA (tracrRNA), endogenous ribonuclease 3 (rnc) and this protein. The tracrRNA serves as a guide for ribonuclease 3-aided processing of pre-crRNA. Subsequently Cas9/crRNA/tracrRNA endonucleolytically cleaves linear or circular dsDNA target complementary to the spacer; Cas9 is inactive in the absence of the 2 guide RNAs (gRNA). Cas9 recognizes the protospacer adjacent motif (PAM) in the CRISPR repeat sequences to help distinguish self versus nonself, as targets within the bacterial CRISPR locus do not have PAMs. PAM recognition is also required for catalytic activity. The polypeptide is CRISPR-associated endonuclease Cas9 (Corynebacterium diphtheriae (strain ATCC 700971 / NCTC 13129 / Biotype gravis)).